The chain runs to 131 residues: Small ribosomal subunit protein bS6 (131 aa).

The interval 98 to 131 (EASPMVKAKDERRERREDFANETADDSEAGDSEE) is disordered. A compositionally biased stretch (basic and acidic residues) spans 104–116 (KAKDERRERREDF). A compositionally biased stretch (acidic residues) spans 120–131 (TADDSEAGDSEE).

This sequence belongs to the bacterial ribosomal protein bS6 family.

In terms of biological role, binds together with bS18 to 16S ribosomal RNA. The sequence is that of Small ribosomal subunit protein bS6 from Klebsiella pneumoniae subsp. pneumoniae (strain ATCC 700721 / MGH 78578).